The sequence spans 109 residues: uncharacterized protein (109 aa).

Positions 1–22 (MKRFPLFLLFTLLTLSTVPAQA) are cleaved as a signal peptide. The tract at residues 39–109 (AYNPDRGRDY…ERRMEDEYGR (71 aa)) is disordered. Over residues 41–109 (NPDRGRDYED…ERRMEDEYGR (69 aa)) the composition is skewed to basic and acidic residues.

This is an uncharacterized protein from Escherichia coli O6:H1 (strain CFT073 / ATCC 700928 / UPEC).